The primary structure comprises 272 residues: Cyanophycinase (272 aa).

Residues S132, E150, and H174 each act as charge relay system in the active site.

This sequence belongs to the peptidase S51 family.

It carries out the reaction [L-4-(L-arginin-2-N-yl)aspartate](n) + H2O = [L-4-(L-arginin-2-N-yl)aspartate](n-1) + L-4-(L-arginin-2-N-yl)aspartate. In terms of biological role, exopeptidase that catalyzes the hydrolytic cleavage of multi-L-arginyl-poly-L-aspartic acid (cyanophycin; a water-insoluble reserve polymer) into aspartate-arginine dipeptides. The chain is Cyanophycinase (cphB) from Geminocystis herdmanii (strain PCC 6308) (Synechocystis sp. (strain PCC 6308)).